A 403-amino-acid polypeptide reads, in one-letter code: Exodeoxyribonuclease 7 large subunit (403 aa).

The protein belongs to the XseA family. As to quaternary structure, heterooligomer composed of large and small subunits.

The protein localises to the cytoplasm. The enzyme catalyses Exonucleolytic cleavage in either 5'- to 3'- or 3'- to 5'-direction to yield nucleoside 5'-phosphates.. Bidirectionally degrades single-stranded DNA into large acid-insoluble oligonucleotides, which are then degraded further into small acid-soluble oligonucleotides. In Streptomyces griseus subsp. griseus (strain JCM 4626 / CBS 651.72 / NBRC 13350 / KCC S-0626 / ISP 5235), this protein is Exodeoxyribonuclease 7 large subunit.